The following is a 93-amino-acid chain: Large ribosomal subunit protein uL23cz/uL23cy (93 aa).

The protein belongs to the universal ribosomal protein uL23 family. As to quaternary structure, part of the 50S ribosomal subunit.

Its subcellular location is the plastid. The protein localises to the chloroplast. Its function is as follows. Binds to 23S rRNA. The polypeptide is Large ribosomal subunit protein uL23cz/uL23cy (rpl23-A) (Coffea arabica (Arabian coffee)).